Here is a 360-residue protein sequence, read N- to C-terminus: MASNGMASSPSSFFPPNFLLHMAQQQAAPPHDPQEHHHHHHHGHHHEQQQHHHHLGPPPPPPPHPHNPFLPSSAQCPSLQEFRGMAPMLGKRPMSYGDGGGGGDEVNGGGEDELSDDGSQAGEKKRRLNVEQVRTLEKNFELGNKLEPERKMQLARALGLQPRQVAIWFQNRRARWKTKQLEKDYDALKRQLDAVKAENDALLNHNKKLQAEIVALKGREAASELINLNKETEASCSNRSENSSEINLDISRTPPPDAAALDAAPTAHHHHHGGGGGGGGGGGMIPFYTSIARPASGGGVDIDQLLHSSSGGAGGPKMEHHGGGGNVQAASVDTASFGNLLCGVDEPPPFWPWPDHQHFH.

2 disordered regions span residues Gln-25–Gln-75 and Met-88–Arg-126. Residues His-36–Leu-55 show a composition bias toward basic residues. Residues Gly-56–Pro-68 are compositionally biased toward pro residues. Gly residues predominate over residues Gly-97–Gly-109. Residues Ala-121–Gln-180 constitute a DNA-binding region (homeobox). A leucine-zipper region spans residues Lys-179–Ser-223. Disordered stretches follow at residues Glu-233–Gly-278 and Gly-299–Gln-328. Over residues Ala-234–Ile-246 the composition is skewed to polar residues.

It belongs to the HD-ZIP homeobox family. Class I subfamily. In terms of tissue distribution, expressed in seedlings, roots, stems, leaf blades and panicles.

The protein resides in the nucleus. Its function is as follows. Probable transcription factor. The protein is Homeobox-leucine zipper protein HOX21 (HOX21) of Oryza sativa subsp. indica (Rice).